The primary structure comprises 312 residues: Zygote arrest protein 1.L (312 aa).

2 disordered regions span residues 79-133 (RDVG…VRFP) and 150-205 (FQDK…DQTR). 2 stretches are compositionally biased toward polar residues: residues 86-95 (NPRQDASVQC) and 113-128 (PQQSPPEQGSPASPTK). Residues 152–196 (DKGENLSEKTEALRSEGSRGEGGRPEGKQEDGEIKEQTKMDKADQ) are compositionally biased toward basic and acidic residues. The 3CxxC-type zinc finger occupies 214–297 (KYGYYHCKDC…RQDLCGRCKG (84 aa)).

The protein belongs to the ZAR1 family. In terms of tissue distribution, ovary.

The protein localises to the cytoplasm. Its subcellular location is the cytoplasmic ribonucleoprotein granule. MRNA-binding protein required for maternal mRNA storage, translation and degradation during oocyte maturation. Probably promotes formation of some phase-separated membraneless compartment that stores maternal mRNAs in oocytes: acts by undergoing liquid-liquid phase separation upon binding to maternal mRNAs. Binds to the 3'-UTR of maternal mRNAs in immature oocytes, inhibiting their translation. In Xenopus laevis (African clawed frog), this protein is Zygote arrest protein 1.L.